The following is a 633-amino-acid chain: Extracellular metalloproteinase 3 (633 aa).

Residues 1-18 (MHGLLLAGLLALPMNVLA) form the signal peptide. Positions 19–246 (HPAEQHASNV…VHNVVDYVAS (228 aa)) are excised as a propeptide. N-linked (GlcNAc...) asparagine glycosylation is present at N410. H429 contributes to the Zn(2+) binding site. The active site involves E430. H433 contributes to the Zn(2+) binding site. Residues N480 and N622 are each glycosylated (N-linked (GlcNAc...) asparagine).

Belongs to the peptidase M36 family. Zn(2+) is required as a cofactor.

The protein localises to the secreted. Secreted metalloproteinase probably acting as a virulence factor. The chain is Extracellular metalloproteinase 3 (MEP3) from Trichophyton equinum (Horse ringworm fungus).